We begin with the raw amino-acid sequence, 57 residues long: Protein translocase subunit SecE (57 aa).

Residues 30 to 50 traverse the membrane as a helical segment; sequence LIAGAGIVFVGFLGFLIFAIM.

This sequence belongs to the SecE/SEC61-gamma family. In terms of assembly, component of the Sec protein translocase complex. Heterotrimer consisting of SecY (alpha), SecG (beta) and SecE (gamma) subunits. The heterotrimers can form oligomers, although 1 heterotrimer is thought to be able to translocate proteins. Interacts with the ribosome. May interact with SecDF, and other proteins may be involved.

The protein resides in the cell membrane. Functionally, essential subunit of the Sec protein translocation channel SecYEG. Clamps together the 2 halves of SecY. May contact the channel plug during translocation. This Haloquadratum walsbyi (strain DSM 16790 / HBSQ001) protein is Protein translocase subunit SecE.